Reading from the N-terminus, the 1072-residue chain is MLGDEKEGTSTIPGLNQIQFEGFYRFIDQGLIEELSKFPKIEDIDHEIEFQLFVETYQLVEPLIKERDAVYESLTYSSELYVSAGLIWKTSRNMQEQRIFIGNIPLMNSLGTSIVNGIYRIVINQILQSPGIYYQSELDHNGISVYTGTIISDWGGRLELEIDKKARIWARVSRKQKISILVLSSAMGLNLREILENVCYPEIFLSFLTDKEKKKIGSKENAILEFYQQFSCVGGDPIFSESLCKELQKKFFHQRCELGRIGRRNINWRLNLNIPQNNIFLLPRDILAAADHLIGMKFGMGTLDDMNHLKNKRIRSVADLLQDQLGLALARLENVVKGTISGAIRHKLIPTPQNLVTSTPLTTTYESFFGLHPLSQVLDRTNPLTQIVHGRKLSYLGPGGLTGRTANFRIRDIHPSHYGRICPIDTSEGINVGLIGSLSIHARIGDWGSLESPFYELFEKSKKARIRMLFLSPSQDEYYMIAAGNSLALNRGIQEEQAVPARYRQEFLTIAWEEVHLRSIFPFQYFSIGASLIPFIEHNDANRALMSSNMQRQAVPLSRSEKCIVGTGLERQVALDSGVPAIAEHEGKILYTDTEKIVFSGNGDTLSIPLIMYQRSNKNTCMHQKPQVRRGKCIKKGQILADGAATVGGELALGKNILVAYMPWEGYNFEDAVLISECLVYGDIYTSFHIRKYEIQTHVTTQGPERITKEIPHLEGRLLRNLDKNGIVMLGSWVETGDILVGKLTPQVAKESSYAPEDRLLRAILGIQVSTSKETCLKLPIGGRGRVIDVRWVQKKGGSSYNPEIIRVYISQKREIKVGDKVAGRHGNKGIISKILPRQDMPYLQDGRPVDMVFNPLGVPSRMNVGQIFECSLGLAGSLLDRHYRIAPFDERYEQEASRKLVFSELYEASKQTANPWVFEPEYPGKSRIFDGRTGDPFEQPVIIGKPYILKLIHQVDDKIHGRSSGHYALVTQQPLRGRSKQGGQRVGEMEVWALEGFGVAHILQEMLTYKSDHIRARQEVLGTTIIGGTIPKPEDAPESFRLLVRELRSLALELNHFLVSEKNFQINRKEV.

This sequence belongs to the RNA polymerase beta chain family. In plastids the minimal PEP RNA polymerase catalytic core is composed of four subunits: alpha, beta, beta', and beta''. When a (nuclear-encoded) sigma factor is associated with the core the holoenzyme is formed, which can initiate transcription.

It is found in the plastid. The protein resides in the chloroplast. It carries out the reaction RNA(n) + a ribonucleoside 5'-triphosphate = RNA(n+1) + diphosphate. Its function is as follows. DNA-dependent RNA polymerase catalyzes the transcription of DNA into RNA using the four ribonucleoside triphosphates as substrates. The chain is DNA-directed RNA polymerase subunit beta from Capsella bursa-pastoris (Shepherd's purse).